Reading from the N-terminus, the 300-residue chain is GTPase Era (300 aa).

One can recognise an Era-type G domain in the interval 4 to 172 (KSGFVALAGK…LEKIKEELPE (169 aa)). The tract at residues 12 to 19 (GKPNVGKS) is G1. 12–19 (GKPNVGKS) lines the GTP pocket. The tract at residues 38 to 42 (QTTRN) is G2. A G3 region spans residues 59-62 (DTPG). GTP-binding positions include 59–63 (DTPGI) and 121–124 (NKID). Residues 121–124 (NKID) form a G4 region. The interval 151 to 153 (ISA) is G5. The region spanning 195 to 280 (IREKIFHLTR…YLDLNVKVKE (86 aa)) is the KH type-2 domain.

The protein belongs to the TRAFAC class TrmE-Era-EngA-EngB-Septin-like GTPase superfamily. Era GTPase family. As to quaternary structure, monomer.

The protein resides in the cytoplasm. It is found in the cell inner membrane. Functionally, an essential GTPase that binds both GDP and GTP, with rapid nucleotide exchange. Plays a role in 16S rRNA processing and 30S ribosomal subunit biogenesis and possibly also in cell cycle regulation and energy metabolism. In Thermotoga maritima (strain ATCC 43589 / DSM 3109 / JCM 10099 / NBRC 100826 / MSB8), this protein is GTPase Era.